The sequence spans 398 residues: Cytochrome b (398 aa).

Transmembrane regions (helical) follow at residues 38-58 (FGSLAGICLVIQIVTGVFLAM), 82-104 (WLLRYMHANGASMFFIVVYLHIF), 119-139 (VWCLGVVIFLLMIVTAFIGYV), and 185-205 (FFSLHYLLPFILVGASLLHLA). Positions 88 and 102 each coordinate heme b. Heme b-binding residues include H189 and H203. H208 serves as a coordination point for a ubiquinone. The next 4 membrane-spanning stretches (helical) occupy residues 231-251 (FYVKDLVGWVAFAIFFSIWIF), 295-315 (AGGVAAIALVFISLLALPFFK), 327-347 (IYQGIFWLLLADCLLLGWIGC), and 354-373 (FVTIGQISSVFFFLFFAITP).

Belongs to the cytochrome b family. As to quaternary structure, the main subunits of complex b-c1 are: cytochrome b, cytochrome c1 and the Rieske protein. Heme b serves as cofactor.

The protein localises to the mitochondrion inner membrane. Functionally, component of the ubiquinol-cytochrome c reductase complex (complex III or cytochrome b-c1 complex) that is part of the mitochondrial respiratory chain. The b-c1 complex mediates electron transfer from ubiquinol to cytochrome c. Contributes to the generation of a proton gradient across the mitochondrial membrane that is then used for ATP synthesis. The protein is Cytochrome b (MT-CYB) of Triticum aestivum (Wheat).